The sequence spans 156 residues: Rhodanese-like domain-containing protein 17 (156 aa).

The Rhodanese domain occupies 44-146 (LDSGYTFLDV…WVNKRFPVKV (103 aa)). Residue Cys-106 is the Cysteine persulfide intermediate of the active site.

The chain is Rhodanese-like domain-containing protein 17 (STR17) from Arabidopsis thaliana (Mouse-ear cress).